The primary structure comprises 706 residues: Termination factor NPH-I homolog (706 aa).

A Helicase ATP-binding domain is found at Ile-62–Arg-227. His-75–Thr-82 serves as a coordination point for ATP. A DEAH box motif is present at residues Asp-168–His-171. The 222-residue stretch at Lys-378–Leu-599 folds into the Helicase C-terminal domain.

It belongs to the DEAD box helicase family. DEAH subfamily. In terms of assembly, part of the viral DNA-directed RNA polymerase that consists of 8 polII-like subunits (RPB1, RPB2, RPB3, RPB5, RPB6, RPB7, RPB9, RPB10), a capping enzyme and a termination factor.

The protein localises to the virion. Its function is as follows. Putative DNA-dependent ATPase required for providing the needed energy to achieve the termination of early transcripts. The polypeptide is Termination factor NPH-I homolog (African swine fever virus (isolate Pig/Kenya/KEN-50/1950) (ASFV)).